A 482-amino-acid polypeptide reads, in one-letter code: MVISAERTNVGFITQVIGPVVDIEFPSGKMPAIYNALRIQGKNAAGLDVAVTCEVQQLLGDNRVRAVAMSSTDGLVRGMEVVDTGAPISVPVGTATLGRIFNVLGEPVDEKGAVNATETLPIHRPAPSFTQLETKPSVFETGIKVIDLLTPYRRGGKIGLFGGAGVGKTVIMMELINNIATQHGGVSVFAGVGERTREGNDLYNEMIESGVIDKDDPSKSKIALVYGQMNEPPGARMRVGLSGLTMAEYFRDVNKQDVLLFIDNIFRFVQAGSEVSALLGRMPSAVGYQPTLGTDVGALQERITSTTEGSITSIQAVYVPADDLTDPAPATTFAHLDGTTVLSRSLAAKGIYPAVDPLGSTSNMLQPDIVGEEHYQTARAVQATLQRYKELQDIIAILGLDELSEEDRLTVARARKIERFLSQPFFVAEVFTGAPGKYVTLEETIKGFQMILSGELDDLPEQAFYMVGNIEEAKAKAEKLKA.

Residue 162-169 (GGAGVGKT) participates in ATP binding.

As to quaternary structure, F-type ATPases have 2 components, CF(1) - the catalytic core - and CF(0) - the membrane proton channel. CF(1) has five subunits: alpha(3), beta(3), gamma(1), delta(1), epsilon(1). CF(0) has four main subunits: a(1), b(1), b'(1) and c(9-12).

It is found in the cellular thylakoid membrane. The enzyme catalyses ATP + H2O + 4 H(+)(in) = ADP + phosphate + 5 H(+)(out). Its activity is regulated as follows. Inhibited by dicyclohexylcarbodiimide. Functionally, produces ATP from ADP in the presence of a proton gradient across the membrane. The catalytic sites are hosted primarily by the beta subunits. The complex from the organism is particularly stable to disruption and remains functional after 6 hrs at 55 degrees Celsius. The sequence is that of ATP synthase subunit beta from Thermosynechococcus vestitus (strain NIES-2133 / IAM M-273 / BP-1).